Reading from the N-terminus, the 565-residue chain is NAD-dependent malic enzyme (565 aa).

Y104 functions as the Proton donor in the catalytic mechanism. Position 157 (R157) interacts with NAD(+). The active-site Proton acceptor is K175. E246, D247, and D270 together coordinate a divalent metal cation. The NAD(+) site is built by D270 and N418.

It belongs to the malic enzymes family. In terms of assembly, homotetramer. Mg(2+) serves as cofactor. It depends on Mn(2+) as a cofactor.

It carries out the reaction (S)-malate + NAD(+) = pyruvate + CO2 + NADH. The catalysed reaction is oxaloacetate + H(+) = pyruvate + CO2. The protein is NAD-dependent malic enzyme of Erwinia tasmaniensis (strain DSM 17950 / CFBP 7177 / CIP 109463 / NCPPB 4357 / Et1/99).